The chain runs to 684 residues: Methionine--tRNA ligase (684 aa).

The 'HIGH' region signature appears at 14–24 (PYANGAIHLGH). Positions 145, 148, 158, and 161 each coordinate Zn(2+). Positions 330 to 334 (KMSKS) match the 'KMSKS' region motif. Position 333 (Lys333) interacts with ATP. Positions 582–684 (DFAKLDLRVA…CGIRPGMQVK (103 aa)) constitute a tRNA-binding domain.

The protein belongs to the class-I aminoacyl-tRNA synthetase family. MetG type 1 subfamily. Homodimer. The cofactor is Zn(2+).

The protein localises to the cytoplasm. It carries out the reaction tRNA(Met) + L-methionine + ATP = L-methionyl-tRNA(Met) + AMP + diphosphate. Is required not only for elongation of protein synthesis but also for the initiation of all mRNA translation through initiator tRNA(fMet) aminoacylation. The polypeptide is Methionine--tRNA ligase (Haemophilus ducreyi (strain 35000HP / ATCC 700724)).